Here is a 344-residue protein sequence, read N- to C-terminus: Polyhomeotic-like protein 2 (344 aa).

Residues M1–E23 are compositionally biased toward polar residues. Residues M1–Q28 form a disordered region. Residues K25–P53 carry the HD1 motif. An FCS-type zinc finger spans residues G114–K148. C123, C126, C142, and C146 together coordinate Zn(2+). The disordered stretch occupies residues R165–S269. Basic residues predominate over residues V173–K183. The span at K216–Y233 shows a compositional bias: polar residues. Positions E234 to R248 are enriched in low complexity. Residues W280–S344 enclose the SAM domain.

As to quaternary structure, component of a PRC1-like complex.

It is found in the nucleus. In terms of biological role, component of a Polycomb group (PcG) multiprotein PRC1-like complex, a complex class required to maintain the transcriptionally repressive state of many genes, including Hox genes, throughout development. PcG PRC1 complex acts via chromatin remodeling and modification of histones; it mediates monoubiquitination of histone H2A 'Lys-119', rendering chromatin heritably changed in its expressibility. The chain is Polyhomeotic-like protein 2 (phc2) from Xenopus laevis (African clawed frog).